Consider the following 416-residue polypeptide: D-amino acid dehydrogenase (416 aa).

3–17 (VIVLGAGIVGVTSAY) contacts FAD.

The protein belongs to the DadA oxidoreductase family. FAD serves as cofactor.

The enzyme catalyses a D-alpha-amino acid + A + H2O = a 2-oxocarboxylate + AH2 + NH4(+). Its pathway is amino-acid degradation; D-alanine degradation; NH(3) and pyruvate from D-alanine: step 1/1. Oxidative deamination of D-amino acids. This is D-amino acid dehydrogenase from Rhizobium johnstonii (strain DSM 114642 / LMG 32736 / 3841) (Rhizobium leguminosarum bv. viciae).